We begin with the raw amino-acid sequence, 210 residues long: Large ribosomal subunit protein uL3 (210 aa).

The tract at residues 136–156 (THGTEKAHRSGGSIGNNTEPG) is disordered.

This sequence belongs to the universal ribosomal protein uL3 family. Part of the 50S ribosomal subunit. Forms a cluster with proteins L14 and L19.

One of the primary rRNA binding proteins, it binds directly near the 3'-end of the 23S rRNA, where it nucleates assembly of the 50S subunit. In Solidesulfovibrio magneticus (strain ATCC 700980 / DSM 13731 / RS-1) (Desulfovibrio magneticus), this protein is Large ribosomal subunit protein uL3.